The chain runs to 383 residues: Chaperone protein DnaJ (383 aa).

In terms of domain architecture, J spans 5 to 70 (DYYEALGVAR…QKRAAYDQFG (66 aa)). The CR-type zinc finger occupies 139–217 (GTEVQIRVPT…CGGRGRVQSQ (79 aa)). Positions 152, 155, 169, 172, 191, 194, 205, and 208 each coordinate Zn(2+). 4 CXXCXGXG motif repeats span residues 152–159 (CDACDGKG), 169–176 (CPTCKGHG), 191–198 (CPRCGGSG), and 205–212 (CRKCGGRG). The segment at 230–249 (TGDRIRLSGEGEPGENGGPP) is disordered.

Belongs to the DnaJ family. Homodimer. Zn(2+) serves as cofactor.

Its subcellular location is the cytoplasm. In terms of biological role, participates actively in the response to hyperosmotic and heat shock by preventing the aggregation of stress-denatured proteins and by disaggregating proteins, also in an autonomous, DnaK-independent fashion. Unfolded proteins bind initially to DnaJ; upon interaction with the DnaJ-bound protein, DnaK hydrolyzes its bound ATP, resulting in the formation of a stable complex. GrpE releases ADP from DnaK; ATP binding to DnaK triggers the release of the substrate protein, thus completing the reaction cycle. Several rounds of ATP-dependent interactions between DnaJ, DnaK and GrpE are required for fully efficient folding. Also involved, together with DnaK and GrpE, in the DNA replication of plasmids through activation of initiation proteins. The polypeptide is Chaperone protein DnaJ (Alkalilimnicola ehrlichii (strain ATCC BAA-1101 / DSM 17681 / MLHE-1)).